Consider the following 142-residue polypeptide: UPF0275 protein PM0505 (142 aa).

Belongs to the UPF0275 family.

In Pasteurella multocida (strain Pm70), this protein is UPF0275 protein PM0505.